The sequence spans 353 residues: Dihydroorotate dehydrogenase (quinone) (353 aa).

Residues 66-70 and Thr-90 contribute to the FMN site; that span reads AGFDK. Lys-70 provides a ligand contact to substrate. 115–119 provides a ligand contact to substrate; sequence NRMGF. Residues Asn-143 and Asn-176 each contribute to the FMN site. Substrate is bound at residue Asn-176. Residue Ser-179 is the Nucleophile of the active site. Asn-181 contacts substrate. The FMN site is built by Lys-212 and Thr-240. Residue 241-242 coordinates substrate; that stretch reads NT. Residues Gly-264, Gly-293, and 314–315 contribute to the FMN site; that span reads YT.

The protein belongs to the dihydroorotate dehydrogenase family. Type 2 subfamily. Monomer. FMN is required as a cofactor.

The protein resides in the cell membrane. The enzyme catalyses (S)-dihydroorotate + a quinone = orotate + a quinol. Its pathway is pyrimidine metabolism; UMP biosynthesis via de novo pathway; orotate from (S)-dihydroorotate (quinone route): step 1/1. Its function is as follows. Catalyzes the conversion of dihydroorotate to orotate with quinone as electron acceptor. This Mycolicibacterium vanbaalenii (strain DSM 7251 / JCM 13017 / BCRC 16820 / KCTC 9966 / NRRL B-24157 / PYR-1) (Mycobacterium vanbaalenii) protein is Dihydroorotate dehydrogenase (quinone).